Consider the following 273-residue polypeptide: MAKHLYKTPIPSTRKGTVDRQVKSNPRNKLIHGRHRCGKGRNARGIITARHRGGGHKRLYRKIDFRRNQKDISGRIITIEYDPNRNAYICLIHYGDGEKRYILHPRGAIIGDTIVSGTKVPISMGNALPLTDMPLGTAIHNIEITRGRGGQLARAAGAVAKLIAKEGKLATLRLPSGEVRLVSQNCLATVGQVGNVGVNQKSLGRAGSKCWLGKRPVVRGVVMNPVDHPHGGGEGKAPIGRKKPTTPWGYPALGRRTRKRKKYSDSFILRRRK.

Disordered stretches follow at residues 1–22 and 225–273; these read MAKH…DRQV and PVDH…RRRK.

This sequence belongs to the universal ribosomal protein uL2 family. In terms of assembly, part of the 50S ribosomal subunit.

The protein localises to the plastid. The protein resides in the chloroplast. The polypeptide is Large ribosomal subunit protein uL2cz/uL2cy (rpl2-A) (Zea mays (Maize)).